Consider the following 231-residue polypeptide: Probable caffeoyl-CoA O-methyltransferase 2 (231 aa).

S-adenosyl-L-methionine-binding positions include threonine 53, aspartate 75, 77–78 (GV), serine 83, aspartate 101, alanine 130, aspartate 152, aspartate 154, and tyrosine 161. Aspartate 152 is a binding site for a divalent metal cation. Aspartate 178 and asparagine 179 together coordinate a divalent metal cation.

Belongs to the class I-like SAM-binding methyltransferase superfamily. Cation-dependent O-methyltransferase family. CCoAMT subfamily.

It carries out the reaction (E)-caffeoyl-CoA + S-adenosyl-L-methionine = (E)-feruloyl-CoA + S-adenosyl-L-homocysteine + H(+). This chain is Probable caffeoyl-CoA O-methyltransferase 2 (omt6), found in Dictyostelium discoideum (Social amoeba).